The sequence spans 100 residues: Small ribosomal subunit protein uS14c (100 aa).

It belongs to the universal ribosomal protein uS14 family. Part of the 30S ribosomal subunit.

The protein localises to the plastid. It localises to the chloroplast. Binds 16S rRNA, required for the assembly of 30S particles. In Nymphaea alba (White water-lily), this protein is Small ribosomal subunit protein uS14c.